We begin with the raw amino-acid sequence, 678 residues long: uncharacterized protein (678 aa).

2 helical membrane passes run 14-34 (LMFA…WTGL) and 180-200 (GAVI…IGGF).

The protein belongs to the mycobacterial PPE family.

The protein localises to the cell membrane. This is an uncharacterized protein from Mycobacterium tuberculosis (strain ATCC 25618 / H37Rv).